Here is a 159-residue protein sequence, read N- to C-terminus: Abscisic acid and environmental stress-inducible protein (159 aa).

A run of 6 repeats spans residues 38–49 (GGGYNHGGGGYN), 50–61 (GGGYNHGGGGYN), 63–74 (GGGYNHGGGGYN), 77–88 (GGGYNHGGGGYN), 91–102 (GGGYNHGGGGYN), and 105–116 (GGGYNHGGGGYN). The segment at 38–135 (GGGYNHGGGG…GYNHGGGGCQ (98 aa)) is 7 X 12 AA repeats of G-G-G-Y-N-H-G-G-G-Y-N. A 7; approximate repeat occupies 124–135 (GGGYNHGGGGCQ).

It belongs to the GRP family.

The protein is Abscisic acid and environmental stress-inducible protein of Medicago sativa subsp. falcata (Sickle medic).